The sequence spans 448 residues: Tubulin beta-1 chain (448 aa).

GTP-binding residues include Gln11, Glu72, Ser141, Gly145, Thr146, Gly147, Asn207, and Asn229. Residue Glu72 participates in Mg(2+) binding. Residues 424–448 (QQYQDAGMDDDEAEEAYEEEEPVEE) are disordered. The span at 430–448 (GMDDDEAEEAYEEEEPVEE) shows a compositional bias: acidic residues.

Belongs to the tubulin family. Dimer of alpha and beta chains. A typical microtubule is a hollow water-filled tube with an outer diameter of 25 nm and an inner diameter of 15 nM. Alpha-beta heterodimers associate head-to-tail to form protofilaments running lengthwise along the microtubule wall with the beta-tubulin subunit facing the microtubule plus end conferring a structural polarity. Microtubules usually have 13 protofilaments but different protofilament numbers can be found in some organisms and specialized cells. Mg(2+) serves as cofactor.

It localises to the cytoplasm. Its subcellular location is the cytoskeleton. Functionally, tubulin is the major constituent of microtubules, a cylinder consisting of laterally associated linear protofilaments composed of alpha- and beta-tubulin heterodimers. Microtubules grow by the addition of GTP-tubulin dimers to the microtubule end, where a stabilizing cap forms. Below the cap, tubulin dimers are in GDP-bound state, owing to GTPase activity of alpha-tubulin. The chain is Tubulin beta-1 chain (TUB1) from Colletotrichum gloeosporioides (Anthracnose fungus).